The chain runs to 277 residues: Large ribosomal subunit protein uL2 (277 aa).

Residues 219–277 (TVRGSVMNPNDHPHGGGEGRSPIGHPSPRTPWGKPALGYKTRKNKKYSDRFIVKRRHDK) are disordered.

Belongs to the universal ribosomal protein uL2 family. As to quaternary structure, part of the 50S ribosomal subunit. Forms a bridge to the 30S subunit in the 70S ribosome.

Functionally, one of the primary rRNA binding proteins. Required for association of the 30S and 50S subunits to form the 70S ribosome, for tRNA binding and peptide bond formation. It has been suggested to have peptidyltransferase activity; this is somewhat controversial. Makes several contacts with the 16S rRNA in the 70S ribosome. The chain is Large ribosomal subunit protein uL2 from Clostridium botulinum (strain Okra / Type B1).